Reading from the N-terminus, the 177-residue chain is Large ribosomal subunit protein uL6 (177 aa).

The protein belongs to the universal ribosomal protein uL6 family. In terms of assembly, part of the 50S ribosomal subunit.

Functionally, this protein binds to the 23S rRNA, and is important in its secondary structure. It is located near the subunit interface in the base of the L7/L12 stalk, and near the tRNA binding site of the peptidyltransferase center. In Rhizobium johnstonii (strain DSM 114642 / LMG 32736 / 3841) (Rhizobium leguminosarum bv. viciae), this protein is Large ribosomal subunit protein uL6.